We begin with the raw amino-acid sequence, 610 residues long: Phosphoenolpyruvate carboxykinase [GTP] (610 aa).

Substrate contacts are provided by residues Arg82 and 221 to 223 (YGG). Positions 230 and 250 each coordinate Mn(2+). Ser272 lines the substrate pocket. Residue 273–278 (ACGKTN) coordinates GTP. Residue Cys274 is part of the active site. Asp297 serves as a coordination point for Mn(2+). Substrate is bound at residue 387–389 (NSR). GTP-binding positions include Arg389, Arg420, and 515–518 (FGDN).

It belongs to the phosphoenolpyruvate carboxykinase [GTP] family. Monomer. Requires Mn(2+) as cofactor.

It localises to the cytoplasm. The catalysed reaction is oxaloacetate + GTP = phosphoenolpyruvate + GDP + CO2. It participates in carbohydrate biosynthesis; gluconeogenesis. In terms of biological role, catalyzes the conversion of oxaloacetate (OAA) to phosphoenolpyruvate (PEP), the rate-limiting step in the metabolic pathway that produces glucose from lactate and other precursors derived from the citric acid cycle. This Corynebacterium glutamicum (strain R) protein is Phosphoenolpyruvate carboxykinase [GTP].